Consider the following 485-residue polypeptide: Probable aspartic-type endopeptidase opsB (485 aa).

A signal peptide spans 1–20 (MRHIFSLLSIVCLMVKHGAC). One can recognise a Peptidase A1 domain in the interval 69–397 (YFCNVTLGTP…DIANNEISIA (329 aa)). A glycan (N-linked (GlcNAc...) asparagine) is linked at Asn-72. Asp-87 is an active-site residue. N-linked (GlcNAc...) asparagine glycosylation is found at Asn-99, Asn-107, Asn-111, and Asn-132. Residue Asp-285 is part of the active site. N-linked (GlcNAc...) asparagine glycans are attached at residues Asn-328, Asn-337, and Asn-402. Ser-461 carries GPI-anchor amidated serine lipidation. A propeptide spans 462–485 (AGVARADKQYLAIALIAVWFVLGL) (removed in mature form).

The protein belongs to the peptidase A1 family.

It is found in the cell membrane. Its function is as follows. Probable GPI-anchored aspartic-type endopeptidase which contributes to virulence. The chain is Probable aspartic-type endopeptidase opsB (opsB) from Aspergillus fumigatus (strain ATCC MYA-4609 / CBS 101355 / FGSC A1100 / Af293) (Neosartorya fumigata).